The chain runs to 437 residues: Proline--tRNA ligase (437 aa).

This sequence belongs to the class-II aminoacyl-tRNA synthetase family. ProS type 2 subfamily. Homodimer.

It localises to the cytoplasm. It carries out the reaction tRNA(Pro) + L-proline + ATP = L-prolyl-tRNA(Pro) + AMP + diphosphate. Its function is as follows. Catalyzes the attachment of proline to tRNA(Pro) in a two-step reaction: proline is first activated by ATP to form Pro-AMP and then transferred to the acceptor end of tRNA(Pro). The protein is Proline--tRNA ligase of Acidiphilium cryptum (strain JF-5).